The primary structure comprises 183 residues: Putative ribosomal N-acetyltransferase YdaF (183 aa).

In terms of domain architecture, N-acetyltransferase spans 10 to 176; the sequence is ITIRLLEPKD…HDLVYYSLLK (167 aa).

Belongs to the acetyltransferase family. In terms of assembly, homohexamer, and homodimer.

Its function is as follows. Putative N-acetyltransferase. May act on ribosomal proteins (Potential). This is Putative ribosomal N-acetyltransferase YdaF (ydaF) from Bacillus subtilis (strain 168).